Consider the following 197-residue polypeptide: Transcription factor FapR (197 aa).

It belongs to the FapR family.

Its function is as follows. Transcriptional factor involved in regulation of membrane lipid biosynthesis by repressing genes involved in fatty acid and phospholipid metabolism. The chain is Transcription factor FapR from Bacillus mycoides (strain KBAB4) (Bacillus weihenstephanensis).